Reading from the N-terminus, the 203-residue chain is HTH-type transcriptional regulator BetI (203 aa).

An HTH tetR-type domain is found at 8–68 (PVRRKALVDA…ATIRSLLGKL (61 aa)). Positions 31-50 (TMSEIARTAGVSPALAHHYF) form a DNA-binding region, H-T-H motif.

The protein operates within amine and polyamine biosynthesis; betaine biosynthesis via choline pathway [regulation]. Repressor involved in the biosynthesis of the osmoprotectant glycine betaine. It represses transcription of the choline transporter BetT and the genes of BetAB involved in the synthesis of glycine betaine. This is HTH-type transcriptional regulator BetI from Rhizobium meliloti (strain 1021) (Ensifer meliloti).